The sequence spans 536 residues: Quinate permease (536 aa).

Topologically, residues 1–26 (MTLLALKEDRPTPKAVYNWRVYTCAA) are cytoplasmic. Residues 27 to 47 (IASFASCMIGYDSAFIGTTLA) form a helical membrane-spanning segment. Over 48 to 74 (LPSFKKEFDFASYTPGALALLQSNIVS) the chain is Extracellular. A helical membrane pass occupies residues 75 to 95 (VYQAGAFFGSLFAFATSYFLG). At 96–98 (RRK) the chain is on the cytoplasmic side. Residues 99–119 (SLIAFSVVFIIGAAIMLAADG) traverse the membrane as a helical segment. At 120-131 (QGRGIAPIIAGR) the chain is on the extracellular side. The chain crosses the membrane as a helical span at residues 132–152 (VLAGIGVGGASNMVPIYISEL). The Cytoplasmic portion of the chain corresponds to 153-160 (APPAVRGR). Residues 161–181 (LVGIYELGWQIGGLVGFWINY) traverse the membrane as a helical segment. Residues 182–195 (GVNTTMAPTRSQWL) are Extracellular-facing. N-linked (GlcNAc...) asparagine glycosylation is present at Asn184. A helical membrane pass occupies residues 196 to 216 (IPFAVQLIPAGLLFLGSFWIP). Residues 217 to 285 (ESPRWLFANG…SLKQRKVQWR (69 aa)) are Cytoplasmic-facing. A helical transmembrane segment spans residues 286 to 306 (FFLGGMLFLWQNGSGINAINY). At 307 to 327 (YSPTVFRSIGITGTNTGFLTT) the chain is on the extracellular side. A helical transmembrane segment spans residues 328 to 349 (GIFGVVKMVLTIVWLLWLVDLV). Over 350–352 (GRR) the chain is Cytoplasmic. The helical transmembrane segment at 353-373 (RMLFIGATGGSLCMWFIGAYI) threads the bilayer. Topologically, residues 374–389 (KIAGPGSTKAEDAKLT) are extracellular. A helical transmembrane segment spans residues 390–410 (SGGIAAIFFFYLWTAFYTPSW). The Cytoplasmic portion of the chain corresponds to 411–435 (NGTPWVINSEMFDQNTRSLGQASAA). Residues 436–456 (ANNWFWNFIISRFTPQMFIKM) traverse the membrane as a helical segment. The Extracellular portion of the chain corresponds to 457–458 (EY). A helical transmembrane segment spans residues 459 to 479 (GVYFFFASLMLLSIVFIYFFI). Residues 480–536 (PETKSIPLEAMDRLFEIKPVHNANKILMAELNFDRNPEREESSLDEKDRVTQTENAV) are Cytoplasmic-facing. The span at 516–530 (PEREESSLDEKDRVT) shows a compositional bias: basic and acidic residues. The disordered stretch occupies residues 516-536 (PEREESSLDEKDRVTQTENAV).

The protein belongs to the major facilitator superfamily. Sugar transporter (TC 2.A.1.1) family.

Its subcellular location is the membrane. The chain is Quinate permease (qa-y) from Neurospora terricola.